A 227-amino-acid chain; its full sequence is Ribosomal RNA large subunit methyltransferase E (227 aa).

Residues G78, W80, D103, D119, and D143 each coordinate S-adenosyl-L-methionine. The Proton acceptor role is filled by K183.

This sequence belongs to the class I-like SAM-binding methyltransferase superfamily. RNA methyltransferase RlmE family.

It is found in the cytoplasm. It carries out the reaction uridine(2552) in 23S rRNA + S-adenosyl-L-methionine = 2'-O-methyluridine(2552) in 23S rRNA + S-adenosyl-L-homocysteine + H(+). In terms of biological role, specifically methylates the uridine in position 2552 of 23S rRNA at the 2'-O position of the ribose in the fully assembled 50S ribosomal subunit. The chain is Ribosomal RNA large subunit methyltransferase E from Rickettsia akari (strain Hartford).